The sequence spans 134 residues: Holo-[acyl-carrier-protein] synthase (134 aa).

Asp8 and Glu58 together coordinate Mg(2+).

It belongs to the P-Pant transferase superfamily. AcpS family. Mg(2+) serves as cofactor.

It is found in the cytoplasm. It carries out the reaction apo-[ACP] + CoA = holo-[ACP] + adenosine 3',5'-bisphosphate + H(+). Transfers the 4'-phosphopantetheine moiety from coenzyme A to a Ser of acyl-carrier-protein. This Acidiphilium cryptum (strain JF-5) protein is Holo-[acyl-carrier-protein] synthase.